Reading from the N-terminus, the 91-residue chain is MSENTTATTRARRKVREGLVVSDKMDKTVVVEVEDRVKHGLYGKIMRRTSKLKVHDEQNSAGIGDRVLIMETRPLSATKRWRLVEILEKAK.

This sequence belongs to the universal ribosomal protein uS17 family. Part of the 30S ribosomal subunit.

Its function is as follows. One of the primary rRNA binding proteins, it binds specifically to the 5'-end of 16S ribosomal RNA. In Salinispora tropica (strain ATCC BAA-916 / DSM 44818 / JCM 13857 / NBRC 105044 / CNB-440), this protein is Small ribosomal subunit protein uS17.